Reading from the N-terminus, the 570-residue chain is Formate--tetrahydrofolate ligase (570 aa).

T65 to T72 provides a ligand contact to ATP.

It belongs to the formate--tetrahydrofolate ligase family.

The catalysed reaction is (6S)-5,6,7,8-tetrahydrofolate + formate + ATP = (6R)-10-formyltetrahydrofolate + ADP + phosphate. It functions in the pathway one-carbon metabolism; tetrahydrofolate interconversion. This Herpetosiphon aurantiacus (strain ATCC 23779 / DSM 785 / 114-95) protein is Formate--tetrahydrofolate ligase.